The following is a 198-amino-acid chain: Probable host range protein 2-3 (198 aa).

The interval 153–198 (GENGYEDSTEEEDNEEDTDGVCLYCLEEEEEEDEDEDEDEDEDEEE) is disordered. 2 stretches are compositionally biased toward acidic residues: residues 156–171 (GYEDSTEEEDNEEDTD) and 178–198 (LEEEEEEDEDEDEDEDEDEEE).

It belongs to the poxviridae C7 protein family.

Functionally, plays a role for multiplication of the virus in different cell types. The chain is Probable host range protein 2-3 from Rabbit fibroma virus (strain Kasza) (RFV).